Here is a 156-residue protein sequence, read N- to C-terminus: Small ribosomal subunit protein uS7 (156 aa).

It belongs to the universal ribosomal protein uS7 family. As to quaternary structure, part of the 30S ribosomal subunit. Contacts proteins S9 and S11.

Its function is as follows. One of the primary rRNA binding proteins, it binds directly to 16S rRNA where it nucleates assembly of the head domain of the 30S subunit. Is located at the subunit interface close to the decoding center, probably blocks exit of the E-site tRNA. The protein is Small ribosomal subunit protein uS7 of Prochlorococcus marinus (strain MIT 9211).